The following is a 184-amino-acid chain: Ribosome-recycling factor (184 aa).

This sequence belongs to the RRF family.

The protein resides in the cytoplasm. In terms of biological role, responsible for the release of ribosomes from messenger RNA at the termination of protein biosynthesis. May increase the efficiency of translation by recycling ribosomes from one round of translation to another. The protein is Ribosome-recycling factor of Natranaerobius thermophilus (strain ATCC BAA-1301 / DSM 18059 / JW/NM-WN-LF).